Here is a 462-residue protein sequence, read N- to C-terminus: MGKFITTTLSPPLYARSKLLCFSLLYLFSTIFLFLYVSLSRNQCIFRYSPFDPIQAKLFSYPSSYGEHKYALPTHRSSCSSPIFFSDYWTVLKEIQSILSGSSPKENLRYINGKSESFGGNFSTQKRFSYFNHSNIDVEVPCGFFRDFPVSNSDRVEMEKCGLVVASAIFNDHDKIRQPVGLGVKTLETVCFYMFIDDKTLNSLFHHNVILKNNPSDYRVGAWRIIKISKSENLYLNPAMNGVIPKYLIHRLFPNSKFSIWVDAKIQLMIDPLLLIHSMLVVPEVDMAISKHPFFVNTMEEAMATARWKKWGDVDGLRIQMETYCEHGLKPWSSSKLPYPTDVPDTALILRRHGIRSNLFSCFMFNELEAFNPRDQLAFAFVRDHINPKVKMNMFEVEVFEQVVVEYRHNLKKIESSTYEEQEEEQKQESLRTIQKRRKWLDHESWSLNRSSCKNYLTDMWG.

At 1-18 the chain is on the cytoplasmic side; that stretch reads MGKFITTTLSPPLYARSK. A helical transmembrane segment spans residues 19–39; that stretch reads LLCFSLLYLFSTIFLFLYVSL. The Lumenal segment spans residues 40–462; sequence SRNQCIFRYS…CKNYLTDMWG (423 aa). Residues N121, N132, and N449 are each glycosylated (N-linked (GlcNAc...) asparagine).

Belongs to the alkaline ceramidase family. In terms of tissue distribution, preferentially expressed in pollen grains, pollen tubes and silique guard cells, but barely detectable in roots, stems and leaves.

The protein localises to the golgi apparatus membrane. It carries out the reaction an N-acylsphing-4-enine + H2O = sphing-4-enine + a fatty acid. It functions in the pathway lipid metabolism. In terms of biological role, endoplasmic reticulum ceramidase that catalyzes the hydrolysis of ceramides into sphingosine and free fatty acids at alkaline pH (e.g. pH 9.5). Inactive on phytoceramide. Involved in the regulation of turgor pressure in guard cells and pollen tubes. This chain is Alkaline ceramidase TOD1, found in Arabidopsis thaliana (Mouse-ear cress).